Consider the following 493-residue polypeptide: Ribosomal protein uS12 methylthiotransferase RimO (493 aa).

The 117-residue stretch at 5 to 121 (RTVALVTLGC…ISDRLQTILN (117 aa)) folds into the MTTase N-terminal domain. Positions 14, 50, 84, 198, 202, and 205 each coordinate [4Fe-4S] cluster. The Radical SAM core domain occupies 184-415 (LGTSPVASVK…QLAEELTSQR (232 aa)). Residues 417 to 487 (EERVGETLQV…GVDLVAEHHE (71 aa)) enclose the TRAM domain.

The protein belongs to the methylthiotransferase family. RimO subfamily. Requires [4Fe-4S] cluster as cofactor.

The protein localises to the cytoplasm. It carries out the reaction L-aspartate(89)-[ribosomal protein uS12]-hydrogen + (sulfur carrier)-SH + AH2 + 2 S-adenosyl-L-methionine = 3-methylsulfanyl-L-aspartate(89)-[ribosomal protein uS12]-hydrogen + (sulfur carrier)-H + 5'-deoxyadenosine + L-methionine + A + S-adenosyl-L-homocysteine + 2 H(+). Functionally, catalyzes the methylthiolation of an aspartic acid residue of ribosomal protein uS12. In Streptomyces griseus subsp. griseus (strain JCM 4626 / CBS 651.72 / NBRC 13350 / KCC S-0626 / ISP 5235), this protein is Ribosomal protein uS12 methylthiotransferase RimO.